The sequence spans 126 residues: Large ribosomal subunit protein bL12 (126 aa).

It belongs to the bacterial ribosomal protein bL12 family. Homodimer. Part of the ribosomal stalk of the 50S ribosomal subunit. Forms a multimeric L10(L12)X complex, where L10 forms an elongated spine to which 2 to 4 L12 dimers bind in a sequential fashion. Binds GTP-bound translation factors.

Forms part of the ribosomal stalk which helps the ribosome interact with GTP-bound translation factors. Is thus essential for accurate translation. The chain is Large ribosomal subunit protein bL12 from Nitrosococcus oceani (strain ATCC 19707 / BCRC 17464 / JCM 30415 / NCIMB 11848 / C-107).